A 155-amino-acid polypeptide reads, in one-letter code: MRSLPFFCRGQVVRGFGRGSKQLGIPTANFPEQVVDNLPADVSTGIYYGWASVGSGDVHKMVVSIGWNPYYKNVKKSMETHIIHTFKEDFYGEILNVAIVGYLRPEKNFDSLESLISAIQGDIEEAKKQLDLPEHLKLKDDNFFQVSKGKIMNGH.

ATP-binding residues include Gly15, Lys21, Thr27, and Asn29. Mg(2+)-binding residues include Thr27 and Asn29. Glu79 functions as the Nucleophile in the catalytic mechanism. 3 residues coordinate ATP: Ile82, His84, and Tyr91. Arg104, Lys107, and Phe109 together coordinate FMN.

As to quaternary structure, monomer. Directly interacts with TNFRSF1A death domain; this interaction may be supported by TRADD. In the absence of TNFRSF1A, interacts with TRADD. Independently of TNFRSF1A, interacts with the NADPH oxidase subunit CYBA. Requires Zn(2+) as cofactor. It depends on Mg(2+) as a cofactor.

It localises to the cytoplasm. It catalyses the reaction riboflavin + ATP = FMN + ADP + H(+). It participates in cofactor biosynthesis; FMN biosynthesis; FMN from riboflavin (ATP route): step 1/1. In terms of biological role, catalyzes the phosphorylation of riboflavin (vitamin B2) to form flavin-mononucleotide (FMN), hence rate-limiting enzyme in the synthesis of FAD. Essential for TNF-induced reactive oxygen species (ROS) production. Through its interaction with both TNFRSF1A and CYBA, physically and functionally couples TNFRSF1A to NADPH oxidase. TNF-activation of RFK may enhance the incorporation of FAD in NADPH oxidase, a critical step for the assembly and activation of NADPH oxidase. This is Riboflavin kinase (Rfk) from Mus musculus (Mouse).